The chain runs to 120 residues: NAD(P)H-quinone oxidoreductase subunit 3 (120 aa).

3 consecutive transmembrane segments (helical) span residues 10–30 (FLGF…TNLI), 64–84 (MFAL…PWAV), and 89–109 (LGLL…IALA).

Belongs to the complex I subunit 3 family. As to quaternary structure, NDH-1 can be composed of about 15 different subunits; different subcomplexes with different compositions have been identified which probably have different functions.

It is found in the cellular thylakoid membrane. It catalyses the reaction a plastoquinone + NADH + (n+1) H(+)(in) = a plastoquinol + NAD(+) + n H(+)(out). The enzyme catalyses a plastoquinone + NADPH + (n+1) H(+)(in) = a plastoquinol + NADP(+) + n H(+)(out). In terms of biological role, NDH-1 shuttles electrons from an unknown electron donor, via FMN and iron-sulfur (Fe-S) centers, to quinones in the respiratory and/or the photosynthetic chain. The immediate electron acceptor for the enzyme in this species is believed to be plastoquinone. Couples the redox reaction to proton translocation, and thus conserves the redox energy in a proton gradient. Cyanobacterial NDH-1 also plays a role in inorganic carbon-concentration. The chain is NAD(P)H-quinone oxidoreductase subunit 3 from Prochlorococcus marinus (strain MIT 9301).